Reading from the N-terminus, the 390-residue chain is L-seryl-tRNA(Sec) selenium transferase (390 aa).

Residue Lys225 is modified to N6-(pyridoxal phosphate)lysine.

Belongs to the SelA family. It depends on pyridoxal 5'-phosphate as a cofactor.

It localises to the cytoplasm. It carries out the reaction L-seryl-tRNA(Sec) + selenophosphate + H(+) = L-selenocysteinyl-tRNA(Sec) + phosphate. The protein operates within aminoacyl-tRNA biosynthesis; selenocysteinyl-tRNA(Sec) biosynthesis; selenocysteinyl-tRNA(Sec) from L-seryl-tRNA(Sec) (bacterial route): step 1/1. Converts seryl-tRNA(Sec) to selenocysteinyl-tRNA(Sec) required for selenoprotein biosynthesis. The sequence is that of L-seryl-tRNA(Sec) selenium transferase from Helicobacter pylori (strain P12).